A 358-amino-acid chain; its full sequence is 1-deoxy-D-xylulose 5-phosphate reductoisomerase (358 aa).

NADPH is bound by residues Thr7, Gly8, Ser9, Ile10, Gly31, Asn33, and Asn114. Lys115 serves as a coordination point for 1-deoxy-D-xylulose 5-phosphate. Glu116 lines the NADPH pocket. Asp134 contributes to the Mn(2+) binding site. Residues Ser135, Glu136, Ser157, and His180 each contribute to the 1-deoxy-D-xylulose 5-phosphate site. Position 136 (Glu136) interacts with Mn(2+). Gly186 lines the NADPH pocket. Positions 193, 198, 199, and 202 each coordinate 1-deoxy-D-xylulose 5-phosphate. Residue Glu202 coordinates Mn(2+).

The protein belongs to the DXR family. Mg(2+) is required as a cofactor. The cofactor is Mn(2+).

The enzyme catalyses 2-C-methyl-D-erythritol 4-phosphate + NADP(+) = 1-deoxy-D-xylulose 5-phosphate + NADPH + H(+). The protein operates within isoprenoid biosynthesis; isopentenyl diphosphate biosynthesis via DXP pathway; isopentenyl diphosphate from 1-deoxy-D-xylulose 5-phosphate: step 1/6. Catalyzes the NADPH-dependent rearrangement and reduction of 1-deoxy-D-xylulose-5-phosphate (DXP) to 2-C-methyl-D-erythritol 4-phosphate (MEP). The polypeptide is 1-deoxy-D-xylulose 5-phosphate reductoisomerase (Wolinella succinogenes (strain ATCC 29543 / DSM 1740 / CCUG 13145 / JCM 31913 / LMG 7466 / NCTC 11488 / FDC 602W) (Vibrio succinogenes)).